A 531-amino-acid polypeptide reads, in one-letter code: Chaperonin GroEL, chloroplastic (531 aa).

Residues 30–33 (TLGP), 87–91 (DGTTT), glycine 415, 481–483 (NAA), and aspartate 497 contribute to the ATP site.

Belongs to the chaperonin (HSP60) family. As to quaternary structure, forms a cylinder of 14 subunits composed of two heptameric rings stacked back-to-back. Interacts with the co-chaperonin GroES.

Its subcellular location is the plastid. The protein resides in the chloroplast. It carries out the reaction ATP + H2O + a folded polypeptide = ADP + phosphate + an unfolded polypeptide.. Its function is as follows. Together with its co-chaperonin GroES, plays an essential role in assisting protein folding. The GroEL-GroES system forms a nano-cage that allows encapsulation of the non-native substrate proteins and provides a physical environment optimized to promote and accelerate protein folding. This Emiliania huxleyi (Coccolithophore) protein is Chaperonin GroEL, chloroplastic.